A 293-amino-acid chain; its full sequence is 4-hydroxy-tetrahydrodipicolinate synthase (293 aa).

Pyruvate is bound at residue T44. The Proton donor/acceptor role is filled by Y132. K161 serves as the catalytic Schiff-base intermediate with substrate. I203 contacts pyruvate.

This sequence belongs to the DapA family. Homotetramer; dimer of dimers.

The protein localises to the cytoplasm. It catalyses the reaction L-aspartate 4-semialdehyde + pyruvate = (2S,4S)-4-hydroxy-2,3,4,5-tetrahydrodipicolinate + H2O + H(+). It participates in amino-acid biosynthesis; L-lysine biosynthesis via DAP pathway; (S)-tetrahydrodipicolinate from L-aspartate: step 3/4. Its function is as follows. Catalyzes the condensation of (S)-aspartate-beta-semialdehyde [(S)-ASA] and pyruvate to 4-hydroxy-tetrahydrodipicolinate (HTPA). This is 4-hydroxy-tetrahydrodipicolinate synthase from Sulfurihydrogenibium sp. (strain YO3AOP1).